Here is a 534-residue protein sequence, read N- to C-terminus: Zinc finger protein 703-A (534 aa).

Disordered regions lie at residues 1 to 35 (MNCS…THPV), 90 to 251 (SQIG…VAPV), and 300 to 320 (QLPG…LTGA). 3 stretches are compositionally biased toward low complexity: residues 15–34 (QSSS…PTHP), 115–124 (RSSSLKLGES), and 146–155 (GSSAGGSADK). Over residues 173–182 (SPSSRVSSPG) the composition is skewed to polar residues. Over residues 185-200 (CDSKNNESQEKKEPEA) the composition is skewed to basic and acidic residues. Positions 204 to 217 (SLETSQANPTLTRA) are enriched in polar residues. Residues 218–229 (SISNSSAESSQS) show a composition bias toward low complexity. Residues 230 to 239 (GDVTPSSKSD) show a composition bias toward polar residues. The C2H2-type zinc-finger motif lies at 406-434 (HICNWVSASGPCDKRFATSEELLAHLRTH).

Belongs to the Elbow/Noc family.

It is found in the nucleus. Its subcellular location is the cytoplasm. In terms of biological role, transcriptional corepressor which does not bind directly to DNA and may regulate transcription through recruitment of histone deacetylases to gene promoters. Regulates cell adhesion, migration and proliferation. Involved in specification of the lateral neural plate border (NPB). May be required for segmental gene expression during hindbrain development. The chain is Zinc finger protein 703-A (znf703-a) from Xenopus laevis (African clawed frog).